A 46-amino-acid polypeptide reads, in one-letter code: Large ribosomal subunit protein bL36 (46 aa).

The protein belongs to the bacterial ribosomal protein bL36 family.

This chain is Large ribosomal subunit protein bL36, found in Escherichia coli O7:K1 (strain IAI39 / ExPEC).